The chain runs to 446 residues: Tubulin gamma chain (446 aa).

142–148 (AGGTGSG) contacts GTP.

This sequence belongs to the tubulin family.

The protein resides in the cytoplasm. The protein localises to the cytoskeleton. Its subcellular location is the microtubule organizing center. It is found in the spindle pole body. Its function is as follows. Tubulin is the major constituent of microtubules. The gamma chain is found at microtubule organizing centers (MTOC) such as the spindle poles or the centrosome, suggesting that it is involved in the minus-end nucleation of microtubule assembly. In Schizosaccharomyces japonicus (Fission yeast), this protein is Tubulin gamma chain (tug1).